The following is a 130-amino-acid chain: Protein ApaG (130 aa).

The 125-residue stretch at 3-127 (RATTRKIQVT…FSLDVPHMAR (125 aa)) folds into the ApaG domain.

This is Protein ApaG from Azorhizobium caulinodans (strain ATCC 43989 / DSM 5975 / JCM 20966 / LMG 6465 / NBRC 14845 / NCIMB 13405 / ORS 571).